The primary structure comprises 455 residues: Transcriptional regulatory protein FlbD (455 aa).

Residues 2–114 form the Response regulatory domain; it reads RLLVVGKLNG…LIAAVLAAVT (113 aa). Residues 120–349 form the Sigma-54 factor interaction domain; the sequence is MVVRDPAMEQ…LENAMHRAVL (230 aa). ATP contacts are provided by residues 148 to 155 and 211 to 220; these read GESGSGKE and ADGGTLLLDE. The segment at residues 416–435 is a DNA-binding region (H-T-H motif); the sequence is RTHAANILGISIRTLRNKLK.

The protein resides in the cytoplasm. Activation of sigma-54-dependent flagellar gene promoters and strong negative autoregulatory effects on its own promoter. The synthesis and function of FlbD in C.crescentus is controlled by an internal cell-cycle clock. The chain is Transcriptional regulatory protein FlbD (flbD) from Caulobacter vibrioides (strain ATCC 19089 / CIP 103742 / CB 15) (Caulobacter crescentus).